The chain runs to 311 residues: L-lactate dehydrogenase (311 aa).

Residues Val-12, Asp-33, Lys-38, Tyr-63, and 77-78 (GA) each bind NAD(+). Substrate is bound by residues Gln-80, Arg-86, and 118–121 (NPVD). Residues 116–118 (VTN) and Ser-141 each bind NAD(+). 146-149 (DSAR) is a binding site for substrate. Beta-D-fructose 1,6-bisphosphate is bound by residues Arg-151 and His-166. Catalysis depends on His-173, which acts as the Proton acceptor. Tyr-219 carries the post-translational modification Phosphotyrosine. Thr-228 contacts substrate.

It belongs to the LDH/MDH superfamily. LDH family. In terms of assembly, homotetramer.

It localises to the cytoplasm. It carries out the reaction (S)-lactate + NAD(+) = pyruvate + NADH + H(+). The protein operates within fermentation; pyruvate fermentation to lactate; (S)-lactate from pyruvate: step 1/1. Allosterically activated by fructose 1,6-bisphosphate (FBP). In terms of biological role, catalyzes the conversion of lactate to pyruvate. The sequence is that of L-lactate dehydrogenase from Thermoanaerobacter pseudethanolicus (strain ATCC 33223 / 39E) (Clostridium thermohydrosulfuricum).